Reading from the N-terminus, the 67-residue chain is Surface composition regulator (67 aa).

The protein belongs to the GlgS family.

Major determinant of cell surface composition. Negatively regulates motility, adhesion and synthesis of biofilm exopolysaccharides. The polypeptide is Surface composition regulator (Salmonella enteritidis PT4 (strain P125109)).